The following is a 447-amino-acid chain: MNSSKTTICALASSVGKGGIGIVRVSGPLCKVIAKKMLGFIPKPRYAYYGLFFDQESTEIDKGIALFFPKPYSFTGEDVLEFQGHGGMIGMRLLLESAISMGAKLAESGEFSKRSFLNGKMDLVQAEAISDMINANSKRASKSAFRSLSGDFSNQINGLTKSIIELRVFVEATIDFSDEEIDFLQFDQVKCKIKDIKQTIETILKSATQGIILREGLNVAIAGKPNAGKSSLLNALTQESSAIVTDIAGTTRDVLKETIHVNGVPLSIIDTAGLRNSHDKIEKEGIKRANFEIEHADVVLMVFDAQDDKPDLSILPKNINDQSLLLIKNKVDLTSGAIKREVINDIVQLSVSAKYSEGIKLLRKELSNISGLEDLSEGVVLARRRHIIALEASLVSIGNAIMQLEIGAIELMAEDLRFAGQFMGSITGEFSSDDLLDEIFSSFCIGK.

Residues Arg-24, Glu-81, and Lys-120 each coordinate (6S)-5-formyl-5,6,7,8-tetrahydrofolate. Residues 216–371 (GLNVAIAGKP…LRKELSNISG (156 aa)) form the TrmE-type G domain. Residue Asn-226 coordinates K(+). GTP-binding positions include 226–231 (NAGKSS), 245–251 (TDIAGTT), and 270–273 (DTAG). Ser-230 is a Mg(2+) binding site. K(+) contacts are provided by Thr-245, Ile-247, and Thr-250. A Mg(2+)-binding site is contributed by Thr-251. A (6S)-5-formyl-5,6,7,8-tetrahydrofolate-binding site is contributed by Lys-447.

It belongs to the TRAFAC class TrmE-Era-EngA-EngB-Septin-like GTPase superfamily. TrmE GTPase family. Homodimer. Heterotetramer of two MnmE and two MnmG subunits. It depends on K(+) as a cofactor.

The protein localises to the cytoplasm. Functionally, exhibits a very high intrinsic GTPase hydrolysis rate. Involved in the addition of a carboxymethylaminomethyl (cmnm) group at the wobble position (U34) of certain tRNAs, forming tRNA-cmnm(5)s(2)U34. The polypeptide is tRNA modification GTPase MnmE (Vesicomyosocius okutanii subsp. Calyptogena okutanii (strain HA)).